Reading from the N-terminus, the 62-residue chain is uncharacterized protein (62 aa).

Residues 26–62 are a coiled coil; it reads YELATLYEAMQKENEEQIEQSKNKLERLRKEWIRLNG.

This is an uncharacterized protein from Bacillus subtilis (strain 168).